The primary structure comprises 1081 residues: Teashirt homolog 3 (1081 aa).

Disordered regions lie at residues 25 to 104 (LVED…EVQV), 141 to 161 (PSSE…SSCG), and 238 to 257 (HYRD…WSKP). Positions 26-37 (VEDDVEPEEQAA) are enriched in acidic residues. A compositionally biased stretch (basic and acidic residues) spans 68–87 (SSHEMDSESHISETSDRMAD). 2 consecutive C2H2-type zinc fingers follow at residues 214 to 238 (FRCK…ETGH) and 275 to 299 (LKCM…KTKH). A compositionally biased stretch (basic and acidic residues) spans 238–247 (HYRDDNHETD). The tract at residues 325-346 (SLELELPSSPDSTGGTPKATLS) is disordered. The segment at 387-410 (KCMECGSSHDTLQELTAHMMVTGH) adopts a C2H2-type 3; atypical zinc-finger fold. Residues 474–491 (VDKEKAVPDEKPKEREKP) show a composition bias toward basic and acidic residues. 4 disordered regions span residues 474 to 499 (VDKE…EKYD), 626 to 699 (EKMK…KPLS), 792 to 824 (LTKG…TVTT), and 855 to 897 (TESH…RQSN). Residues 606–630 (NFHAMEELVKKVTEKVAKVEEKMKE) adopt a coiled-coil conformation. Polar residues predominate over residues 660–670 (SDGSFKSQENS). Position 682 is a phosphoserine (Ser682). Low complexity-rich tracts occupy residues 800-824 (GCSL…TVTT) and 856-869 (ESHT…SSIS). Residues 891 to 961 (RKGRQSNWNP…NVKYQLRRTG (71 aa)) constitute a DNA-binding region (homeobox; atypical). 2 C2H2-type zinc fingers span residues 976–998 (FFCN…LESH) and 1041–1064 (YQCK…SKTH).

It belongs to the teashirt C2H2-type zinc-finger protein family. As to quaternary structure, interacts (via N-terminus) with HDAC1 and HDAC2; the interaction is direct. Found in a trimeric complex with APBB1 and HDAC1; the interaction between HDAC1 and APBB1 is mediated by TSHZ3. Interacts (via homeobox domain) with APBB1 (via PID domain 1). As to expression, expressed in corticostriatal neurons.

Its subcellular location is the nucleus. The protein localises to the cell projection. It is found in the growth cone. In terms of biological role, transcriptional regulator involved in developmental processes. Functions in association with APBB1, SET and HDAC factors as a transcriptional repressor, that inhibits the expression of CASP4. TSHZ3-mediated transcription repression involves the recruitment of histone deacetylases HDAC1 and HDAC2. Associates with chromatin in a region surrounding the CASP4 transcriptional start site(s). Regulates the development of neurons involved in both respiratory rhythm and airflow control. Promotes maintenance of nucleus ambiguus (nA) motoneurons, which govern upper airway function, and establishes a respiratory rhythm generator (RRG) activity compatible with survival at birth. Involved in the differentiation of the proximal uretic smooth muscle cells during developmental processes. Involved in the up-regulation of myocardin, that directs the expression of smooth muscle cells in the proximal ureter. Involved in the modulation of glutamatergic synaptic transmission and long-term synaptic potentiation. This is Teashirt homolog 3 (Tshz3) from Mus musculus (Mouse).